We begin with the raw amino-acid sequence, 359 residues long: Peptide chain release factor 1 (359 aa).

Q236 carries the N5-methylglutamine modification.

The protein belongs to the prokaryotic/mitochondrial release factor family. In terms of processing, methylated by PrmC. Methylation increases the termination efficiency of RF1.

It localises to the cytoplasm. Peptide chain release factor 1 directs the termination of translation in response to the peptide chain termination codons UAG and UAA. This Ureaplasma parvum serovar 3 (strain ATCC 27815 / 27 / NCTC 11736) protein is Peptide chain release factor 1.